The chain runs to 224 residues: MIDSYCYHPIHNRWQGIRPVSSPGILPTVVEQSGRGERAFDIYSRLLRERIIFLGTGVDDQVADALVAQMLFLEAEDPEKDIQIYINSPGGSVTAGLAIYDTMQQVAPDVVTICYGLAASMGAFLLCGGTKGKRLALPNARIMIHQPLGGAQGQAVDIEIQAKEILFLKETLNGLLAEHTGQPLNKIAEDTDRDHFLSPAKAVEYGLIDRVVDSLTGGGIVKEG.

S120 serves as the catalytic Nucleophile. The active site involves H145.

This sequence belongs to the peptidase S14 family. In terms of assembly, fourteen ClpP subunits assemble into 2 heptameric rings which stack back to back to give a disk-like structure with a central cavity, resembling the structure of eukaryotic proteasomes.

Its subcellular location is the cytoplasm. The enzyme catalyses Hydrolysis of proteins to small peptides in the presence of ATP and magnesium. alpha-casein is the usual test substrate. In the absence of ATP, only oligopeptides shorter than five residues are hydrolyzed (such as succinyl-Leu-Tyr-|-NHMec, and Leu-Tyr-Leu-|-Tyr-Trp, in which cleavage of the -Tyr-|-Leu- and -Tyr-|-Trp bonds also occurs).. In terms of biological role, cleaves peptides in various proteins in a process that requires ATP hydrolysis. Has a chymotrypsin-like activity. Plays a major role in the degradation of misfolded proteins. This Prochlorococcus marinus (strain MIT 9313) protein is ATP-dependent Clp protease proteolytic subunit 1.